We begin with the raw amino-acid sequence, 429 residues long: Enolase (429 aa).

A (2R)-2-phosphoglycerate-binding site is contributed by glutamine 163. Catalysis depends on glutamate 205, which acts as the Proton donor. Residues aspartate 242, glutamate 286, and aspartate 313 each contribute to the Mg(2+) site. (2R)-2-phosphoglycerate is bound by residues lysine 338, arginine 367, serine 368, and lysine 389. The active-site Proton acceptor is the lysine 338.

This sequence belongs to the enolase family. Mg(2+) serves as cofactor.

It is found in the cytoplasm. The protein resides in the secreted. It localises to the cell surface. It catalyses the reaction (2R)-2-phosphoglycerate = phosphoenolpyruvate + H2O. It participates in carbohydrate degradation; glycolysis; pyruvate from D-glyceraldehyde 3-phosphate: step 4/5. Its function is as follows. Catalyzes the reversible conversion of 2-phosphoglycerate (2-PG) into phosphoenolpyruvate (PEP). It is essential for the degradation of carbohydrates via glycolysis. The chain is Enolase from Citrifermentans bemidjiense (strain ATCC BAA-1014 / DSM 16622 / JCM 12645 / Bem) (Geobacter bemidjiensis).